A 267-amino-acid chain; its full sequence is Regulatory protein VirG (267 aa).

The region spanning 29-143 (HVLLVDDDVA…EFLARIRVAL (115 aa)) is the Response regulatory domain. Aspartate 78 bears the 4-aspartylphosphate mark. Residues 155-255 (RRSFCFTDWT…ARGAGYFFDA (101 aa)) constitute a DNA-binding region (ompR/PhoB-type).

Post-translationally, phosphorylated by wide host range (WHR) VirA protein.

Its subcellular location is the cytoplasm. VirG is required for the positive regulation of at least two vir loci encoded by the Ti plasmid of A.tumefaciens. The polypeptide is Regulatory protein VirG (virG) (Rhizobium radiobacter (Agrobacterium tumefaciens)).